Here is a 299-residue protein sequence, read N- to C-terminus: NmrA-like family domain-containing protein 1 (299 aa).

NADP(+)-binding positions include 11–16, 37–41, 58–59, Gln-62, 79–81, Lys-92, Lys-133, and 155–158; these read GGTGAQ, RNPRK, DQ, TNY, and YFEN. The segment at 153-189 is interaction with ASS1; sequence PCYFENLLSHFLPQKAPDGKSYLLSLPTGDVPMDGMS.

Belongs to the NmrA-type oxidoreductase family. As to quaternary structure, homodimer. Interacts with ASS1. Interaction is enhanced by low NADPH/NADP(+) ratios, which results in inhibition of ASS1 activity.

It is found in the cytoplasm. Its subcellular location is the perinuclear region. It localises to the nucleus. Functionally, redox sensor protein. Undergoes restructuring and subcellular redistribution in response to changes in intracellular NADPH/NADP(+) levels. At low NADPH concentrations the protein is found mainly as a monomer, and binds argininosuccinate synthase (ASS1), the enzyme involved in nitric oxide synthesis. Association with ASS1 impairs its activity and reduces the production of nitric oxide, which subsecuently prevents apoptosis. Under normal NADPH concentrations, the protein is found as a dimer and hides the binding site for ASS1. The homodimer binds one molecule of NADPH. Has higher affinity for NADPH than for NADP(+). Binding to NADPH is necessary to form a stable dimer. The chain is NmrA-like family domain-containing protein 1 (NMRAL1) from Homo sapiens (Human).